The primary structure comprises 141 residues: uncharacterized protein (141 aa).

2 consecutive transmembrane segments (helical) span residues 41–61 and 95–115; these read LIML…NYLF and IIFL…SGFF.

It localises to the cell membrane. This is an uncharacterized protein from Rickettsia prowazekii (strain Madrid E).